The following is a 359-amino-acid chain: MGRISRPRRGSLAYSPRKRAKSIVPRIRKWPQEQEVRMLGFAGYKAGMTHVLMIDDAPGLTKGKEIFVPVTIVEAPPLMVYGIRAYKRGYFGLETATEVIVPDFKLENYPSKRAKNVTFYKLLERRIKTLPKNYTEEVFQQKLGELEDLVKTGEVVELRALVATQPWLARIKKKPEVMEYAVGGTSIEEKFNYIKEKLGKEIRVGEILQEGELLDIVAVTKGKGTQGPVKRWGVKLTSHKDSKGRRKVATIGPWHPARVMWTVPRAGQMGFHHRTEFNKRLLRIGENGKLTLNGEKIEITPNGGFPHYGVVKNDFIMIAGTIPGAIKRIIRMRPAVRPPAKRPPAEAPQITYISRESKQ.

The segment at valine 336–glutamine 359 is disordered.

This sequence belongs to the universal ribosomal protein uL3 family. Part of the 50S ribosomal subunit. Forms a cluster with proteins L14 and L24e.

In terms of biological role, one of the primary rRNA binding proteins, it binds directly near the 3'-end of the 23S rRNA, where it nucleates assembly of the 50S subunit. This chain is Large ribosomal subunit protein uL3, found in Thermococcus sibiricus (strain DSM 12597 / MM 739).